Here is a 427-residue protein sequence, read N- to C-terminus: Imidazolonepropionase (427 aa).

Fe(3+) contacts are provided by H81 and H83. Residues H81 and H83 each contribute to the Zn(2+) site. 4-imidazolone-5-propanoate-binding residues include R90, Y153, and H186. Y153 serves as a coordination point for N-formimidoyl-L-glutamate. H260 contacts Fe(3+). A Zn(2+)-binding site is contributed by H260. E263 lines the 4-imidazolone-5-propanoate pocket. Fe(3+) is bound at residue D335. D335 is a Zn(2+) binding site. N-formimidoyl-L-glutamate is bound by residues N337 and G339. Residue S340 coordinates 4-imidazolone-5-propanoate.

It belongs to the metallo-dependent hydrolases superfamily. HutI family. Requires Zn(2+) as cofactor. The cofactor is Fe(3+).

It localises to the cytoplasm. The catalysed reaction is 4-imidazolone-5-propanoate + H2O = N-formimidoyl-L-glutamate. The protein operates within amino-acid degradation; L-histidine degradation into L-glutamate; N-formimidoyl-L-glutamate from L-histidine: step 3/3. Its function is as follows. Catalyzes the hydrolytic cleavage of the carbon-nitrogen bond in imidazolone-5-propanoate to yield N-formimidoyl-L-glutamate. It is the third step in the universal histidine degradation pathway. The sequence is that of Imidazolonepropionase from Chloroflexus aggregans (strain MD-66 / DSM 9485).